The primary structure comprises 547 residues: Glucose-6-phosphate isomerase (547 aa).

Residue Glu355 is the Proton donor of the active site. Catalysis depends on residues His386 and Lys512.

The protein belongs to the GPI family.

The protein localises to the cytoplasm. The enzyme catalyses alpha-D-glucose 6-phosphate = beta-D-fructose 6-phosphate. Its pathway is carbohydrate biosynthesis; gluconeogenesis. The protein operates within carbohydrate degradation; glycolysis; D-glyceraldehyde 3-phosphate and glycerone phosphate from D-glucose: step 2/4. Functionally, catalyzes the reversible isomerization of glucose-6-phosphate to fructose-6-phosphate. The sequence is that of Glucose-6-phosphate isomerase from Corynebacterium diphtheriae (strain ATCC 700971 / NCTC 13129 / Biotype gravis).